Reading from the N-terminus, the 79-residue chain is MYYVAQVIKDECSKYNCKQCTLFCPEPNTLMYTDEGHHAYVNTLRCKGCALCVYVCSELLKRDSIEMVYAENRDVAGVR.

2 4Fe-4S ferredoxin-type domains span residues 3–35 (YVAQ…YTDE) and 37–65 (HHAY…RDSI). Positions 12, 17, 20, 24, 46, 49, 52, and 56 each coordinate [4Fe-4S] cluster.

In terms of assembly, heterotetramer of one alpha, one beta, one delta and one gamma chain. The cofactor is [4Fe-4S] cluster.

This chain is Ferredoxin oxidoreductase 1 subunit ForD (forD1), found in Aquifex aeolicus (strain VF5).